A 194-amino-acid chain; its full sequence is uncharacterized protein (194 aa).

2 CBS domains span residues 13–72 (MSFP…PKDV) and 78–133 (MSKK…LLEI). An ACP-type MB domain is found at 159-192 (YINGICENCGYQGRVRLYQGRYLCDECIEEFEEK). Fe cation contacts are provided by cysteine 164, cysteine 167, cysteine 182, and cysteine 185. Zn(2+) contacts are provided by cysteine 164, cysteine 167, cysteine 182, and cysteine 185.

This is an uncharacterized protein from Methanocaldococcus jannaschii (strain ATCC 43067 / DSM 2661 / JAL-1 / JCM 10045 / NBRC 100440) (Methanococcus jannaschii).